Here is a 542-residue protein sequence, read N- to C-terminus: uncharacterized protein (542 aa).

12 consecutive transmembrane segments (helical) span residues 12 to 32, 57 to 77, 94 to 114, 123 to 143, 168 to 188, 191 to 211, 216 to 236, 243 to 263, 277 to 297, 313 to 333, 358 to 378, and 391 to 411; these read LVFG…GTVL, FGDV…AILY, VIVM…SWTA, AAAV…AGLA, LFAV…AALV, FVVS…LVTL, IDAP…AFLL, SGVV…PTVI, IATF…IPGA, VLAL…VQAT, VTSW…AVPM, and LIIF…GTSL.

The protein belongs to the monovalent cation:proton antiporter 1 (CPA1) transporter (TC 2.A.36) family.

Its subcellular location is the cell membrane. This is an uncharacterized protein from Mycobacterium bovis (strain ATCC BAA-935 / AF2122/97).